A 1097-amino-acid chain; its full sequence is DNA-directed RNA polymerase subunit beta (1097 aa).

The tract at residues 1071 to 1097 is disordered; sequence MQDVNPKRNTPSRPTYESLGTSEYAED. The span at 1077-1091 shows a compositional bias: polar residues; sequence KRNTPSRPTYESLGT.

Belongs to the RNA polymerase beta chain family. In cyanobacteria the RNAP catalytic core is composed of 2 alpha, 1 beta, 1 beta', 1 gamma and 1 omega subunit. When a sigma factor is associated with the core the holoenzyme is formed, which can initiate transcription.

It carries out the reaction RNA(n) + a ribonucleoside 5'-triphosphate = RNA(n+1) + diphosphate. Its function is as follows. DNA-dependent RNA polymerase catalyzes the transcription of DNA into RNA using the four ribonucleoside triphosphates as substrates. This Prochlorococcus marinus subsp. pastoris (strain CCMP1986 / NIES-2087 / MED4) protein is DNA-directed RNA polymerase subunit beta.